We begin with the raw amino-acid sequence, 447 residues long: N-succinylarginine dihydrolase (447 aa).

Substrate-binding positions include 19-28 (AGLSVGNKAS), Asn-110, and 137-138 (HR). Glu-174 is a catalytic residue. Position 213 (Arg-213) interacts with substrate. His-249 is an active-site residue. Residues Asp-251 and Asn-365 each contribute to the substrate site. The Nucleophile role is filled by Cys-371.

The protein belongs to the succinylarginine dihydrolase family. Homodimer.

It carries out the reaction N(2)-succinyl-L-arginine + 2 H2O + 2 H(+) = N(2)-succinyl-L-ornithine + 2 NH4(+) + CO2. The protein operates within amino-acid degradation; L-arginine degradation via AST pathway; L-glutamate and succinate from L-arginine: step 2/5. Catalyzes the hydrolysis of N(2)-succinylarginine into N(2)-succinylornithine, ammonia and CO(2). The sequence is that of N-succinylarginine dihydrolase from Photorhabdus laumondii subsp. laumondii (strain DSM 15139 / CIP 105565 / TT01) (Photorhabdus luminescens subsp. laumondii).